Consider the following 77-residue polypeptide: Probable small nuclear ribonucleoprotein G (77 aa).

A Sm domain is found at threonine 4–isoleucine 76.

Belongs to the snRNP Sm proteins family. As to quaternary structure, core component of the spliceosomal U1, U2, U4 and U5 small nuclear ribonucleoproteins (snRNPs), the building blocks of the spliceosome.

The protein localises to the cytoplasm. It localises to the cytosol. Its subcellular location is the nucleus. Its function is as follows. Plays a role in pre-mRNA splicing as a core component of the spliceosomal U1, U2, U4 and U5 small nuclear ribonucleoproteins (snRNPs), the building blocks of the spliceosome. The sequence is that of Probable small nuclear ribonucleoprotein G (snr-7) from Caenorhabditis elegans.